The primary structure comprises 323 residues: SPbeta prophage-derived uncharacterized protein YorG (323 aa).

Residues 222 to 272 are a coiled coil; it reads TAENLEKAIIEAVERQEQAEGIVAVTYEEQKQNNASEELDFNSLMDQIKEI.

The chain is SPbeta prophage-derived uncharacterized protein YorG (yorG) from Bacillus subtilis (strain 168).